Consider the following 181-residue polypeptide: Biofilm-surface layer protein A (181 aa).

Residues 1-28 (MKRKLLSSLAISALSLGLLVSAPTASFA) form the signal peptide.

The protein belongs to the BslA/BslB family. As to quaternary structure, forms polymers.

It localises to the secreted. Its subcellular location is the cell wall. Involved in biofilm formation. Self-polymerizes and forms a layer on the surface of biofilms that confers hydrophobicity to the biofilm. The layer is stable and capable of resistance to high mechanical force compression. Required for complex colony architecture. May function synergistically with exopolysaccharides and TasA amyloid fibers to facilitate the assembly of the biofilm matrix. This is Biofilm-surface layer protein A from Bacillus subtilis (strain 168).